A 139-amino-acid polypeptide reads, in one-letter code: GSK3B-interacting protein (139 aa).

The required for PRKAR2A interaction; contributes to a protective effect against H(2)O(2)-induced apoptosis stretch occupies residues 41 to 45 (VNDVL). Residues 115 to 139 (SPAYREAFGNALLQRLEALKREGQS) are interaction with GSK3B and acts as a GSK3B inhibitor.

The protein belongs to the GSKIP family. As to quaternary structure, forms a complex composed of PRKAR2A or PRKAR2B, GSK3B and GSKIP through GSKIP interaction; facilitates PKA-induced phosphorylation of GSK3B leading to GSK3B inactivation; recruits DNM1L through GSK3B for PKA-mediated phosphorylation of DNM1L; promotes beta-catenin degradation through GSK3B-induced phosphorylation of beta-catenin; stabilizes beta-catenin and enhances Wnt-induced signaling through PKA-induced phosphorylation of beta-catenin. Interacts with GSK3B; induces GSK3B-mediated phosphorylation of GSKIP and inhibits GSK3B kinase activity. Phosphorylated by GSK3B.

The protein resides in the cytoplasm. The protein localises to the nucleus. A-kinase anchoring protein for GSK3B and PKA that regulates or facilitates their kinase activity towards their targets. The ternary complex enhances Wnt-induced signaling by facilitating the GSK3B- and PKA-induced phosphorylation of beta-catenin leading to beta-catenin degradation and stabilization respectively. Upon cAMP activation, the ternary complex contributes to neuroprotection against oxidative stress-induced apoptosis by facilitating the PKA-induced phosphorylation of DML1 and PKA-induced inactivation of GSK3B. During neurite outgrowth promotes neuron proliferation; while increases beta-catenin-induced transcriptional activity through GSK3B kinase activity inhibition, reduces N-cadherin level to promote cell cycle progression. May play a role in cleft palate formation and is required for postnatal life through modulation of the activity of GSK3B during development. The chain is GSK3B-interacting protein from Bos taurus (Bovine).